The chain runs to 115 residues: Phosphoribosyl-AMP cyclohydrolase (115 aa).

D80 serves as a coordination point for Mg(2+). C81 provides a ligand contact to Zn(2+). The Mg(2+) site is built by D82 and D84. Residues C97 and C104 each contribute to the Zn(2+) site.

Belongs to the PRA-CH family. In terms of assembly, homodimer. Mg(2+) serves as cofactor. It depends on Zn(2+) as a cofactor.

The protein localises to the cytoplasm. The enzyme catalyses 1-(5-phospho-beta-D-ribosyl)-5'-AMP + H2O = 1-(5-phospho-beta-D-ribosyl)-5-[(5-phospho-beta-D-ribosylamino)methylideneamino]imidazole-4-carboxamide. The protein operates within amino-acid biosynthesis; L-histidine biosynthesis; L-histidine from 5-phospho-alpha-D-ribose 1-diphosphate: step 3/9. Its function is as follows. Catalyzes the hydrolysis of the adenine ring of phosphoribosyl-AMP. The polypeptide is Phosphoribosyl-AMP cyclohydrolase (Mycolicibacterium smegmatis (strain ATCC 700084 / mc(2)155) (Mycobacterium smegmatis)).